Here is a 183-residue protein sequence, read N- to C-terminus: Dual-action ribosomal maturation protein DarP (183 aa).

The protein belongs to the DarP family.

Its subcellular location is the cytoplasm. Member of a network of 50S ribosomal subunit biogenesis factors which assembles along the 30S-50S interface, preventing incorrect 23S rRNA structures from forming. Promotes peptidyl transferase center (PTC) maturation. The protein is Dual-action ribosomal maturation protein DarP of Shigella flexneri.